Here is a 171-residue protein sequence, read N- to C-terminus: Envelope protein UL128 (171 aa).

Belongs to the HHV-5 UL128 protein family. In terms of assembly, forms the envelope pentamer complex (PC) composed of gH, gL, UL128, UL130, and UL131A. The pentamer interacts with host NRP2.

It is found in the virion membrane. In terms of biological role, plays a role in viral entry into host cells. Forms a pentameric complex at the surface of the viral envelope together with gH, gL, UL130 and UL131. This complex is required for entry in epithelial, endothelial and myeloid host cells. Mechanistically, engages host receptor(s) including neurophilin 2/NRP2 to mediate infection. Additionally, monomeric UL128 may interfere with certain inflammatory cytokines to increase infection and dissemination by blocking monocytes migration. The sequence is that of Envelope protein UL128 (UL128) from Human cytomegalovirus (strain Merlin) (HHV-5).